The chain runs to 393 residues: SH3 domain-binding protein 5-like (393 aa).

A disordered region spans residues 1–58; it reads MAELRQVPGGRETPQGELRPEVVEDEVPRSPVAEEPGGGGSSSSEAKLSPREEEELDP. T13 bears the Phosphothreonine mark. The segment covering 18–28 has biased composition (basic and acidic residues); sequence LRPEVVEDEVP. Phosphoserine occurs at positions 30 and 49. Coiled coils occupy residues 59–140 and 169–272; these read RIQE…YERA and WQEM…EQIH. The disordered stretch occupies residues 273–332; it reads ARRRGGLPPHPLGPRRSSPVGAEAGPEDMEDGDSGIEGAEGAGLEEGSSLGPGPAPDTDT. Residues 297 to 306 are compositionally biased toward acidic residues; it reads GPEDMEDGDS. Over residues 317-332 the composition is skewed to low complexity; that stretch reads EEGSSLGPGPAPDTDT. A phosphoserine mark is found at S343, S350, S358, S362, and S378. Positions 362-393 are disordered; the sequence is SLDGQELGTRSGGRRGSDGGARGGRHQRSVSL. The span at 384 to 393 shows a compositional bias: basic residues; that stretch reads GGRHQRSVSL.

It belongs to the SH3BP5 family.

Functions as a guanine nucleotide exchange factor (GEF) for RAB11A. The polypeptide is SH3 domain-binding protein 5-like (SH3BP5L) (Homo sapiens (Human)).